The following is a 304-amino-acid chain: Putative ankyrin repeat protein R598 (304 aa).

ANK repeat units lie at residues 7-36 (NIVT…SINL), 77-107 (YIST…PVDF), 122-151 (GSNH…DVNA), 152-181 (HNYL…NVLR), 183-209 (ANGN…EIDM), 210-239 (NLSR…DINK), and 265-293 (FDFT…NVDI).

This Acanthamoeba polyphaga (Amoeba) protein is Putative ankyrin repeat protein R598.